A 754-amino-acid polypeptide reads, in one-letter code: Bifunctional sesterterpene synthase astC (754 aa).

A signal peptide spans Met1–Ser24. The segment at Ile58 to Trp388 is sesterterpene synthase. Asp149 and Asp153 together coordinate Mg(2+). The segment at Arg389 to Val753 is geranylfarnesyl diphosphate synthase. A compositionally biased stretch (basic and acidic residues) spans Glu392–Asp403. A disordered region spans residues Glu392–Ser414. Mg(2+) contacts are provided by Asp512 and Asp516.

The protein in the N-terminal section; belongs to the terpene synthase family. This sequence in the C-terminal section; belongs to the FPP/GGPP synthase family. The cofactor is Mg(2+).

It carries out the reaction (2E,6E,10E,14E)-geranylfarnesyl diphosphate = preasperterpenoid A + diphosphate. It functions in the pathway secondary metabolite biosynthesis; terpenoid biosynthesis. Functionally, bifunctional sesterterpene synthase; part of the gene cluster that mediates the biosynthesis of the asperterpenoids, sesterterpenes that exhibit anti-tuberculosis activity. The first step of the pathway is performed by the sesterterpene synthase astC that possesses both prenyl transferase and terpene cyclase activity, converting isopentenyl diphosphate and dimethylallyl diphosphate into geranylfarnesyl diphosphate (GFPP) and further converting GFPP into preasperterpenoid A, respectively. The cytochrome P450 monooxygenase astB then dually oxidizes preasperterpenoid A to produce asperterpenoid A along with a minor product, asperterpenoid B. Finally, the cytochrome P450 monooxygenase astA converts asperterpenoid A into asperterpenoid C. In Talaromyces wortmannii (Penicillium wortmannii), this protein is Bifunctional sesterterpene synthase astC.